The sequence spans 436 residues: GTPase Der (436 aa).

2 EngA-type G domains span residues 4 to 167 (PIVA…PDEA) and 175 to 351 (IRFS…DNHR). Residues 10–17 (GRPNVGKS), 57–61 (DTGGI), 119–122 (NKVD), 181–188 (GRPNVGKS), 229–233 (DTAGM), and 294–297 (NKWD) each bind GTP. One can recognise a KH-like domain in the interval 352–436 (KRITSSTLND…PIKLIVRARK (85 aa)).

This sequence belongs to the TRAFAC class TrmE-Era-EngA-EngB-Septin-like GTPase superfamily. EngA (Der) GTPase family. Associates with the 50S ribosomal subunit.

GTPase that plays an essential role in the late steps of ribosome biogenesis. In Leuconostoc mesenteroides subsp. mesenteroides (strain ATCC 8293 / DSM 20343 / BCRC 11652 / CCM 1803 / JCM 6124 / NCDO 523 / NBRC 100496 / NCIMB 8023 / NCTC 12954 / NRRL B-1118 / 37Y), this protein is GTPase Der.